The sequence spans 194 residues: Outer membrane protein A (194 aa).

An N-terminal signal peptide occupies residues 1–24 (MNKPSKFALALAFAAVTASGVASA). Residues 30–38 (WRNPYGNVW) traverse the membrane as a beta stranded segment. The OmpA-like domain maps to 77-193 (MAAKVVFNAD…RVEIEIVGSR (117 aa)).

The protein belongs to the outer membrane OOP (TC 1.B.6) superfamily.

The protein resides in the cell outer membrane. Its function is as follows. Structural protein that may protect the integrity of the bacterium. The chain is Outer membrane protein A from Bordetella avium.